We begin with the raw amino-acid sequence, 1224 residues long: DNA-directed RNA polymerase subunit beta (1224 aa).

It belongs to the RNA polymerase beta chain family. In terms of assembly, the RNAP catalytic core consists of 2 alpha, 1 beta, 1 beta' and 1 omega subunit. When a sigma factor is associated with the core the holoenzyme is formed, which can initiate transcription.

It catalyses the reaction RNA(n) + a ribonucleoside 5'-triphosphate = RNA(n+1) + diphosphate. DNA-dependent RNA polymerase catalyzes the transcription of DNA into RNA using the four ribonucleoside triphosphates as substrates. The protein is DNA-directed RNA polymerase subunit beta of Pelotomaculum thermopropionicum (strain DSM 13744 / JCM 10971 / SI).